Here is a 330-residue protein sequence, read N- to C-terminus: 2-methyl-6-phytyl-1,4-hydroquinone methyltransferase 1, chloroplastic (330 aa).

The N-terminal 45 residues, 1–45 (MKEMVSSSTFRAPGGLGFLGPSKIGLIPLRNRSGVRSRVKYIAPK), are a transit peptide targeting the chloroplast. The Chloroplast intermembrane portion of the chain corresponds to 46 to 295 (CAVSSARPAS…DVEKPVNPFT (250 aa)). Residues 107 to 116 (VVDVGGGTGF) are SAM motif I. Positions 152 to 165 (VNIIEGDAEDLPYP) are SAM motif II. The tract at residues 193 to 206 (RVLKLGGVACLIGP) is SAM motif III. The chain crosses the membrane as a helical span at residues 296–316 (FIFRFVMGTICASYYVLVPIY). Over 317 to 330 (MWMKDQIVPKDQPI) the chain is Stromal.

It belongs to the class I-like SAM-binding methyltransferase superfamily. MPBQ/MBSQ MT family.

It is found in the plastid. Its subcellular location is the chloroplast inner membrane. It catalyses the reaction 2-methyl-6-phytyl-1,4-benzene-1,4-diol + S-adenosyl-L-methionine = 2,3-dimethyl-6-phytylbenzene-1,4-diol + S-adenosyl-L-homocysteine + H(+). It carries out the reaction 2-methyl-6-(all-trans-nonaprenyl)benzene-1,4-diol + S-adenosyl-L-methionine = plastoquinol-9 + S-adenosyl-L-homocysteine + H(+). The enzyme catalyses 6-geranylgeranyl-2-methylbenzene-1,4-diol + S-adenosyl-L-methionine = 6-geranylgeranyl-2,3-dimethylbenzene-1,4-diol + S-adenosyl-L-homocysteine + H(+). The protein operates within cofactor biosynthesis; tocopherol biosynthesis. In terms of biological role, involved in a key methylation step in both tocopherols (vitamin E) and plastoquinone synthesis. Catalyzes the conversion of 2-methyl-6-phytyl-1,4-hydroquinone (MPBQ) to 2,3-dimethyl-6-phytyl-1,4-hydroquinone (DMPQ, a substrate for tocopherol cyclase), and 2-methyl-6-solanyl-1,4-benzoquinone (MSBQ) to plastoquinone. In Oryza sativa subsp. japonica (Rice), this protein is 2-methyl-6-phytyl-1,4-hydroquinone methyltransferase 1, chloroplastic (ARSM2).